The following is a 224-amino-acid chain: UPF0758 protein lmo1549 (224 aa).

The MPN domain occupies 102–224 (VVRCPEDAVK…YISLKEKGYF (123 aa)). His-173, His-175, and Asp-186 together coordinate Zn(2+). The JAMM motif signature appears at 173-186 (HNHPSGDPTPSSED).

This sequence belongs to the UPF0758 family.

The sequence is that of UPF0758 protein lmo1549 from Listeria monocytogenes serovar 1/2a (strain ATCC BAA-679 / EGD-e).